A 63-amino-acid polypeptide reads, in one-letter code: Large ribosomal subunit protein uL29 (63 aa).

Belongs to the universal ribosomal protein uL29 family.

The chain is Large ribosomal subunit protein uL29 from Pelagibacter ubique (strain HTCC1062).